A 174-amino-acid chain; its full sequence is Large ribosomal subunit protein uL10 (174 aa).

This sequence belongs to the universal ribosomal protein uL10 family. In terms of assembly, part of the ribosomal stalk of the 50S ribosomal subunit. The N-terminus interacts with L11 and the large rRNA to form the base of the stalk. The C-terminus forms an elongated spine to which L12 dimers bind in a sequential fashion forming a multimeric L10(L12)X complex.

Its function is as follows. Forms part of the ribosomal stalk, playing a central role in the interaction of the ribosome with GTP-bound translation factors. The chain is Large ribosomal subunit protein uL10 from Geobacter sulfurreducens (strain ATCC 51573 / DSM 12127 / PCA).